A 230-amino-acid polypeptide reads, in one-letter code: Ribosomal RNA small subunit methyltransferase G (230 aa).

Residues Gly-95, Phe-100, 146–147, and Arg-159 contribute to the S-adenosyl-L-methionine site; that span reads GE.

It belongs to the methyltransferase superfamily. RNA methyltransferase RsmG family.

The protein resides in the cytoplasm. Its function is as follows. Specifically methylates the N7 position of a guanine in 16S rRNA. The sequence is that of Ribosomal RNA small subunit methyltransferase G from Parabacteroides distasonis (strain ATCC 8503 / DSM 20701 / CIP 104284 / JCM 5825 / NCTC 11152).